The chain runs to 91 residues: MARNVNCVYLNKEAPGLDFQLYPGDLGKRIFDNISKEAWGLWQQKQTMLINEKKLNMMNLEDRQFLEQQMINFLFEGKQVEIEGYVPPVED.

It belongs to the Fe(2+)-trafficking protein family.

Could be a mediator in iron transactions between iron acquisition and iron-requiring processes, such as synthesis and/or repair of Fe-S clusters in biosynthetic enzymes. This chain is Probable Fe(2+)-trafficking protein, found in Shewanella denitrificans (strain OS217 / ATCC BAA-1090 / DSM 15013).